The primary structure comprises 838 residues: Pentatricopeptide repeat-containing protein At4g19440, chloroplastic (838 aa).

The transit peptide at 1-32 (MAALLYFPKISSQMTSSHFISFSPMDLRRLSR) directs the protein to the chloroplast. 16 PPR repeats span residues 238 to 268 (SKTT…VCKG), 272 to 306 (DVYL…GVAP), 307 to 341 (NVVT…GMEP), 342 to 376 (TLIT…GFPP), 377 to 411 (NVIV…GLSL), 412 to 446 (TSST…GFNV), 447 to 481 (NQGS…NMSP), 482 to 516 (GGGL…GFVV), 517 to 551 (DTRT…GCVM), 552 to 586 (DRVS…GLKP), 587 to 621 (DNYT…GMLP), 622 to 656 (DVYT…NVQP), 657 to 691 (NTVV…GISP), 692 to 726 (NSAT…GLEP), 727 to 761 (NVFH…NVHP), and 762 to 796 (NKIT…GIVP).

It belongs to the PPR family. P subfamily.

Its subcellular location is the plastid. The protein resides in the chloroplast. This Arabidopsis thaliana (Mouse-ear cress) protein is Pentatricopeptide repeat-containing protein At4g19440, chloroplastic.